The primary structure comprises 2094 residues: Protein Ycf2 (2094 aa).

An ATP-binding site is contributed by 1385 to 1392 (GPPETGRS).

Belongs to the Ycf2 family.

It is found in the plastid. It localises to the chloroplast stroma. Its function is as follows. Probable ATPase of unknown function. Its presence in a non-photosynthetic plant (Epifagus virginiana) and experiments in tobacco indicate that it has an essential function which is probably not related to photosynthesis. This Huperzia lucidula (Shining clubmoss) protein is Protein Ycf2.